The sequence spans 149 residues: MAFHSLLLLCLAGLAFVSETAAVHHESEHSKCPLMVKVLDAVRGRPAVNVDVKVFKKTEEQTWELFAAGKTNDNGEIHELTTDDKFGEGLYKVEFDTISYWKALGVSPFHEYADVVFTANDAGHRHYTIAAQLSPYSFSTTAIVSNPTE.

The N-terminal stretch at 1–22 (MAFHSLLLLCLAGLAFVSETAA) is a signal peptide. Sulfocysteine is present on C32. K37 is a binding site for L-thyroxine. E64 bears the 4-carboxyglutamate mark. Positions 76 and 139 each coordinate L-thyroxine.

This sequence belongs to the transthyretin family. As to quaternary structure, homotetramer. Dimer of dimers. In the homotetramer, subunits assemble around a central channel that can accommodate two ligand molecules. Interacts with RBP4. Sulfonation of the reactive cysteine Cys-32 enhances the stability of the native conformation of TTR, avoiding misassembly of the protein leading to amyloid formation. As to expression, detected in liver.

Its subcellular location is the secreted. In terms of biological role, thyroid hormone-binding protein. Probably transports thyroxine from the bloodstream to the brain. The polypeptide is Transthyretin (TTR) (Macropus giganteus (Eastern gray kangaroo)).